A 175-amino-acid chain; its full sequence is MWPLLKNNVVRTGRRYAVFQPRRFTPRPQHDAFGTKDDVRGFTVFSHAACGASLMDPLSPSRWEVALFPSSPPSLKDSCHLCAWTFGLAGPCAAWLSTRRELVGGFSKIIYIQNSAECWSVRETKRCCRICRWRSTSSSTDLRSNPYPIRWCYCWTMFPPMYPVLLLTASPVPTP.

This is an uncharacterized protein from Human cytomegalovirus (strain AD169) (HHV-5).